The following is a 454-amino-acid chain: MEREEEKRVSTLQQSFHHSKEPTFLINQAVLFGESHSSFLPEIERDNRGEKIKTNPRKNRPGTVILSKQSSRRIMSGSQPRPPVIPSRRPGFRVCYICGREFGSQSLGIHEPQCLEKWRVENSKLPKHLRRPEPSKPPPFSGSGSYSLQAANEAAFQSSQAQLLPCETCGRTFLPDRLLVHQRSCKQKVEGPRAPSLDRSDDLAGLKKVSSGITTRPRTVICYICGREFGTLSLPIHEPKCLEKWKVENDRLPREFRQPLPQKPQPLLTGQPKHAGPRQGQLVSCPNCSQTFAPDRLPVHQRSCKAQPSGPKVQDLTLGSRGGLKESTNPKPQRNMAAPPVTDKPKMIRRPPTIVCYICGREYGTKSIAIHEPQCLKKWHNENNLLPKELRRPEPKKPEVRTITAKGFYDLDALNEAAWTSAQSQLVPCNICGRTFLPDRLIVHQRSCKPKVAK.

Positions 48–85 (RGEKIKTNPRKNRPGTVILSKQSSRRIMSGSQPRPPVI) are disordered. The segment covering 66-79 (LSKQSSRRIMSGSQ) has biased composition (polar residues). The C2HC/C3H-type 1 zinc-finger motif lies at 91-120 (GFRVCYICGREFGSQSLGIHEPQCLEKWRV). Residues cysteine 95, cysteine 98, histidine 110, and cysteine 114 each coordinate Zn(2+). The interval 125–146 (LPKHLRRPEPSKPPPFSGSGSY) is disordered. 5 C2HC/C3H-type zinc fingers span residues 162–191 (QLLP…KVEG), 218–247 (RTVI…KWKV), 281–310 (QLVS…QPSG), 352–381 (PTIV…KWHN), and 425–454 (QLVP…KVAK). Zn(2+)-binding residues include cysteine 166, cysteine 169, histidine 181, cysteine 185, cysteine 222, cysteine 225, histidine 237, and cysteine 241. Residues 256 to 282 (FRQPLPQKPQPLLTGQPKHAGPRQGQL) are disordered. Cysteine 285, cysteine 288, histidine 300, cysteine 304, cysteine 356, cysteine 359, histidine 371, cysteine 375, cysteine 429, cysteine 432, histidine 444, and cysteine 448 together coordinate Zn(2+). Residues 299–345 (VHQRSCKAQPSGPKVQDLTLGSRGGLKESTNPKPQRNMAAPPVTDKP) are disordered.

Zn(2+) serves as cofactor.

This chain is Zinc finger protein 474 (ZNF474), found in Bos taurus (Bovine).